The sequence spans 618 residues: Glutathione-regulated potassium-efflux system protein (618 aa).

A run of 12 helical transmembrane segments spans residues 6–26 (NPEL…VPLF), 32–52 (GSVL…FGIV), 55–75 (PTAV…IIGL), 94–114 (LLQV…LLGL), 118–138 (VSFI…MQSL), 152–172 (VIST…SVAF), 186–206 (WVSI…GKWL), 227–247 (ALLV…SMAM), 274–294 (GLLL…HLVF), 298–318 (ILLL…VYII), 336–356 (MAHG…AEVI), and 362–382 (ATFT…AQIA). The region spanning 409–525 (EDNVLVIGFG…LIKQDVDFIV (117 aa)) is the RCK N-terminal domain.

This sequence belongs to the monovalent cation:proton antiporter 2 (CPA2) transporter (TC 2.A.37) family.

It is found in the cell inner membrane. Transport system that facilitate potassium-efflux, possibly by potassium-proton antiport. The sequence is that of Glutathione-regulated potassium-efflux system protein (kefBC) from Haemophilus influenzae (strain ATCC 51907 / DSM 11121 / KW20 / Rd).